The following is a 147-amino-acid chain: Acidic phospholipase A2 beta-bungarotoxin A4 chain (147 aa).

Residues 1–19 (MNPAHLLVLSAVCVSLLGA) form the signal peptide. The propeptide occupies 20 to 27 (ANIPPQHL). 6 disulfide bridges follow: Cys54–Cys146, Cys56–Cys72, Cys71–Cys127, Cys78–Cys120, Cys88–Cys113, and Cys106–Cys118. Ca(2+) contacts are provided by Tyr55, Gly57, and Gly59. Residue His75 is part of the active site. Asp76 contributes to the Ca(2+) binding site. Asp121 is an active-site residue.

The protein belongs to the phospholipase A2 family. Group I subfamily. D49 sub-subfamily. In terms of assembly, heterodimer; disulfide-linked. The A chains have phospholipase A2 activity and the B chains show homology with the basic protease inhibitors. Ca(2+) serves as cofactor. In terms of tissue distribution, expressed by the venom gland.

It is found in the secreted. It catalyses the reaction a 1,2-diacyl-sn-glycero-3-phosphocholine + H2O = a 1-acyl-sn-glycero-3-phosphocholine + a fatty acid + H(+). Its function is as follows. Snake venom phospholipase A2 (PLA2) that inhibits neuromuscular transmission by blocking acetylcholine release from the nerve termini. PLA2 catalyzes the calcium-dependent hydrolysis of the 2-acyl groups in 3-sn-phosphoglycerides. The protein is Acidic phospholipase A2 beta-bungarotoxin A4 chain of Bungarus multicinctus (Many-banded krait).